A 231-amino-acid polypeptide reads, in one-letter code: Cytochrome c oxidase assembly factor 7 (231 aa).

5 Sel1-like repeats span residues 34–66 (PDGC…DQNE), 68–104 (SESC…NKGG), 108–145 (IDSC…DGNF), 146–182 (AASC…SLGH), and 183–218 (MWGC…DLHR).

Belongs to the hcp beta-lactamase family.

It localises to the mitochondrion intermembrane space. Its function is as follows. May be required for assembly of mitochondrial respiratory chain complexes. This chain is Cytochrome c oxidase assembly factor 7 (coa7), found in Xenopus tropicalis (Western clawed frog).